The sequence spans 632 residues: Galactan 5-O-arabinofuranosyltransferase (632 aa).

The next 13 helical transmembrane spans lie at 10–30 (QIVL…IAIA), 45–65 (ALTT…GGVW), 76–96 (LGGL…PLGA), 162–182 (WAIT…WQMI), 184–204 (FEYA…YSSP), 206–226 (PYAA…WSGL), 242–259 (GWAT…AATW), 263–282 (LLAY…ATAL), 298–318 (LAGI…PFLA), 344–364 (FPML…LWLI), 375–395 (ALMI…LTTL), 409–429 (LTVL…QSLA), and 434–454 (AVLS…SQDI). Over 455 to 632 (PNVLRPDLTI…LAIRKPMGNA (178 aa)) the chain is Extracellular.

The protein belongs to the glycosyltransferase 85 family.

It is found in the cell membrane. The enzyme catalyses Adds an alpha-D-arabinofuranosyl group from trans,octacis-decaprenylphospho-beta-D-arabinofuranose at the 5-O-position of the eighth, tenth and twelfth galactofuranose unit of the galactofuranan chain of [beta-D-galactofuranosyl-(1-&gt;5)-beta-D-galactofuranosyl-(1-&gt;6)]14-beta-D-galactofuranosyl-(1-&gt;5)-beta-D-galactofuranosyl-(1-&gt;4)-alpha-L-rhamnopyranosyl-(1-&gt;3)-N-acetyl-alpha-D-glucosaminyl-diphospho-trans,octacis-decaprenol.. It participates in cell wall biogenesis; cell wall polysaccharide biosynthesis. Its function is as follows. Involved in the biosynthesis of the arabinogalactan (AG) region of the mycolylarabinogalactan-peptidoglycan (mAGP) complex, an essential component of the mycobacterial cell wall. Catalyzes the addition of the first key arabinofuranosyl (Araf) residue from the sugar donor decaprenyl-phospho-arabinose (DPA) on the C-5 of a 6-linked galactofuranosyl (Galf) of the galactan domain, thus 'priming' the galactan for further elaboration by other arabinofuranosyltransferases. The polypeptide is Galactan 5-O-arabinofuranosyltransferase (Mycobacterium leprae (strain TN)).